Reading from the N-terminus, the 409-residue chain is Killer cell lectin-like receptor subfamily G member 2 (409 aa).

The segment at 1–120 (MEESWEAAPG…GAEPAPSAWA (120 aa)) is disordered. A compositionally biased stretch (low complexity) spans 41 to 53 (PEGPESSPSPAGA). Residues 72-81 (SPRPGSPRVP) show a composition bias toward pro residues. The segment covering 104–120 (PRNGEAPGAEPAPSAWA) has biased composition (low complexity). Phosphoserine is present on Ser158. Positions 193 to 216 (TESGCDAEGRASPAEGSAGSPGSP) are disordered. Residues 202 to 216 (RASPAEGSAGSPGSP) show a composition bias toward low complexity. Residues 263–283 (WALAFMAVLLAVSGVVIVVLA) form a helical membrane-spanning segment. The 106-residue stretch at 300-405 (SEEHCYYFSA…CSTPRPWVCA (106 aa)) folds into the C-type lectin domain. Intrachain disulfides connect Cys321/Cys404 and Cys383/Cys396.

It is found in the membrane. In Homo sapiens (Human), this protein is Killer cell lectin-like receptor subfamily G member 2 (KLRG2).